Here is a 328-residue protein sequence, read N- to C-terminus: Putative lipase LIH1 (328 aa).

Serine 181 acts as the Nucleophile in catalysis. Active-site charge relay system residues include aspartate 253 and histidine 315.

Belongs to the AB hydrolase superfamily. Lipase family.

The catalysed reaction is a triacylglycerol + H2O = a diacylglycerol + a fatty acid + H(+). Functionally, lipases catalyze the hydrolysis of the ester bond of tri-, di- and monoglycerides of long-chain fatty acids into fatty acids and glycerol. The sequence is that of Putative lipase LIH1 from Saccharomyces cerevisiae (strain ATCC 204508 / S288c) (Baker's yeast).